A 406-amino-acid polypeptide reads, in one-letter code: Argininosuccinate synthase (406 aa).

Residues 12–20 (AYSGGLDTS) and Ala-39 each bind ATP. Positions 90 and 95 each coordinate L-citrulline. Gly-120 serves as a coordination point for ATP. L-aspartate contacts are provided by Thr-122, Asn-126, and Asp-127. Asn-126 is a binding site for L-citrulline. L-citrulline is bound by residues Arg-130, Ser-179, Ser-188, Glu-264, and Tyr-276.

This sequence belongs to the argininosuccinate synthase family. Type 1 subfamily. In terms of assembly, homotetramer.

The protein resides in the cytoplasm. The catalysed reaction is L-citrulline + L-aspartate + ATP = 2-(N(omega)-L-arginino)succinate + AMP + diphosphate + H(+). It functions in the pathway amino-acid biosynthesis; L-arginine biosynthesis; L-arginine from L-ornithine and carbamoyl phosphate: step 2/3. This Geotalea daltonii (strain DSM 22248 / JCM 15807 / FRC-32) (Geobacter daltonii) protein is Argininosuccinate synthase.